The following is a 359-amino-acid chain: MIDAMYATGQGLMGGIWPATVWPVLWVLIKIVAVLAPLMGCVAYLTLWERKAIGFTQVRVGPNRIGPFGLLQPIADALKLLTKEIIIPTAASKGLFILGPIMTIMPALAAWAVIPFGPDVALANVNAGLLFIMAITSLEVYGVIIAGWGSNSKYAFLGAMRASAQMVSYEIAMGFCLVVVLMVSGSLNMTDIVMSQGSGMAASKGLTFLSWNWLPLLPIFVVYFISSLAETNRHPFDVVEGESEIVAGHMVEYSGMSFAMFFLAEYANMILVSVLCVLLFLGGWLSPIDSALFTWIPGWIWLGLKTFVVVTIFLWVRSTFPRFRYDQIMRLGWKIFIPVTLVWLVVVGAWMQTPYNIWK.

8 helical membrane passes run 16–36, 94–114, 128–148, 167–187, 205–225, 261–281, 296–316, and 331–351; these read IWPA…AVLA, GLFI…WAVI, GLLF…IAGW, VSYE…SGSL, GLTF…VYFI, FFLA…LLFL, IPGW…FLWV, and LGWK…GAWM.

It belongs to the complex I subunit 1 family. As to quaternary structure, NDH-1 is composed of 14 different subunits. Subunits NuoA, H, J, K, L, M, N constitute the membrane sector of the complex.

Its subcellular location is the cell inner membrane. It catalyses the reaction a quinone + NADH + 5 H(+)(in) = a quinol + NAD(+) + 4 H(+)(out). Functionally, NDH-1 shuttles electrons from NADH, via FMN and iron-sulfur (Fe-S) centers, to quinones in the respiratory chain. The immediate electron acceptor for the enzyme in this species is believed to be ubiquinone. Couples the redox reaction to proton translocation (for every two electrons transferred, four hydrogen ions are translocated across the cytoplasmic membrane), and thus conserves the redox energy in a proton gradient. This subunit may bind ubiquinone. This chain is NADH-quinone oxidoreductase subunit H, found in Polaromonas naphthalenivorans (strain CJ2).